The sequence spans 416 residues: FBD-associated F-box protein At3g52670 (416 aa).

The 54-residue stretch at 9-62 folds into the F-box domain; that stretch reads EDRMNQLPEDLILRILSFLPTELVIATSVLSKQWRSLWKLVPNLEFDSDDYESE. The region spanning 327–378 is the FBD domain; the sequence is KWNEPKYVPECLLSHLETFVWIRYDWEREEEKEVATYILRNARWLKKGTIST.

In Arabidopsis thaliana (Mouse-ear cress), this protein is FBD-associated F-box protein At3g52670.